The chain runs to 1113 residues: Lon protease homolog, mitochondrial (1113 aa).

The transit peptide at 1–61 directs the protein to the mitochondrion; sequence MLRGQTLPWR…RAFSSSSIRR (61 aa). Positions 42 to 196 are disordered; sequence SRLHRSLPTS…SGEKALQKPS (155 aa). Composition is skewed to basic and acidic residues over residues 64–99, 124–143, and 178–192; these read KPPP…RKAA, KAGA…KDGN, and DGGK…EKAL. The region spanning 204 to 456 is the Lon N-terminal domain; sequence VMAIPIAKRP…KALVVLKKEL (253 aa). 609-616 is an ATP binding site; that stretch reads GPPGVGKT. Over residues 828–858 the composition is skewed to basic and acidic residues; sequence LTDEGKAVQEESQKETESPDSKSPVDPEKST. The disordered stretch occupies residues 828–864; sequence LTDEGKAVQEESQKETESPDSKSPVDPEKSTTETPRV. The 187-residue stretch at 898–1084 folds into the Lon proteolytic domain; that stretch reads TFPPGVTMGL…SEVFDLLFTD (187 aa). Residues Ser990 and Lys1033 contribute to the active site.

This sequence belongs to the peptidase S16 family. As to quaternary structure, homohexamer or homoheptamer. Organized in a ring with a central cavity.

The protein resides in the mitochondrion matrix. It carries out the reaction Hydrolysis of proteins in presence of ATP.. Its function is as follows. ATP-dependent serine protease that mediates the selective degradation of misfolded, unassembled or oxidatively damaged polypeptides as well as certain short-lived regulatory proteins in the mitochondrial matrix. May also have a chaperone function in the assembly of inner membrane protein complexes. Participates in the regulation of mitochondrial gene expression and in the maintenance of the integrity of the mitochondrial genome. Binds to mitochondrial DNA in a site-specific manner. The sequence is that of Lon protease homolog, mitochondrial (pim1) from Aspergillus niger (strain ATCC MYA-4892 / CBS 513.88 / FGSC A1513).